The chain runs to 696 residues: Polyribonucleotide nucleotidyltransferase (696 aa).

Asp-486 and Asp-492 together coordinate Mg(2+). The KH domain maps to 553 to 612 (PRITQKQIPKDRIGELIGPGGKMIRAIIEQSGSEISVDDSGKVTIASPSEESKEKAIAMI). Residues 622–690 (GKIYDGVIKR…KMGKIDLSRK (69 aa)) enclose the S1 motif domain.

Belongs to the polyribonucleotide nucleotidyltransferase family. Mg(2+) is required as a cofactor.

The protein resides in the cytoplasm. It carries out the reaction RNA(n+1) + phosphate = RNA(n) + a ribonucleoside 5'-diphosphate. Its function is as follows. Involved in mRNA degradation. Catalyzes the phosphorolysis of single-stranded polyribonucleotides processively in the 3'- to 5'-direction. This chain is Polyribonucleotide nucleotidyltransferase, found in Leptospira biflexa serovar Patoc (strain Patoc 1 / ATCC 23582 / Paris).